The sequence spans 218 residues: MFGFLKQVGDYTRDAVDAARNLTQGLAVTFDHMKRRPVTVQYPYEKLIPSERYRGRIHYEFDKCIACEVCVRVCPINLPVVDWVMNKETKKKELRNYSIDFGVCIFCGNCVEYCPTNCLSMTEEYELAAFDRHSLNFDNVALGRLPTSVTTDPAVQPLRELAYLPAGEVQPHGVDPSRPRAGQRPDQVLSSLKQNAGGSAGNEGESATSTNTSKGSAE.

4Fe-4S ferredoxin-type domains lie at 55–84 (GRIH…VDWV) and 95–124 (RNYS…MTEE). 8 residues coordinate [4Fe-4S] cluster: Cys-64, Cys-67, Cys-70, Cys-74, Cys-104, Cys-107, Cys-110, and Cys-114. Residues 168-218 (EVQPHGVDPSRPRAGQRPDQVLSSLKQNAGGSAGNEGESATSTNTSKGSAE) are disordered. Over residues 208 to 218 (TSTNTSKGSAE) the composition is skewed to polar residues.

This sequence belongs to the complex I 23 kDa subunit family. In terms of assembly, NDH-1 is composed of at least 11 different subunits. The cofactor is [4Fe-4S] cluster.

It localises to the cellular thylakoid membrane. The enzyme catalyses a plastoquinone + NADH + (n+1) H(+)(in) = a plastoquinol + NAD(+) + n H(+)(out). It catalyses the reaction a plastoquinone + NADPH + (n+1) H(+)(in) = a plastoquinol + NADP(+) + n H(+)(out). Functionally, NDH-1 shuttles electrons from an unknown electron donor, via FMN and iron-sulfur (Fe-S) centers, to quinones in the respiratory and/or the photosynthetic chain. The immediate electron acceptor for the enzyme in this species is believed to be plastoquinone. Couples the redox reaction to proton translocation, and thus conserves the redox energy in a proton gradient. This chain is NAD(P)H-quinone oxidoreductase subunit I, found in Synechococcus sp. (strain WH7803).